We begin with the raw amino-acid sequence, 474 residues long: tRNA-2-methylthio-N(6)-dimethylallyladenosine synthase (474 aa).

The MTTase N-terminal domain occupies 3–120 (KKLHIKTWGC…LPEMIDQIRD (118 aa)). Residues Cys12, Cys49, Cys83, Cys157, Cys161, and Cys164 each contribute to the [4Fe-4S] cluster site. A Radical SAM core domain is found at 143–375 (RADGPSAFVS…QDRITQQAMR (233 aa)). Residues 378-441 (RQMLGTVQRI…TNSLRGTFVR (64 aa)) form the TRAM domain.

This sequence belongs to the methylthiotransferase family. MiaB subfamily. In terms of assembly, monomer. [4Fe-4S] cluster is required as a cofactor.

The protein localises to the cytoplasm. The catalysed reaction is N(6)-dimethylallyladenosine(37) in tRNA + (sulfur carrier)-SH + AH2 + 2 S-adenosyl-L-methionine = 2-methylsulfanyl-N(6)-dimethylallyladenosine(37) in tRNA + (sulfur carrier)-H + 5'-deoxyadenosine + L-methionine + A + S-adenosyl-L-homocysteine + 2 H(+). Catalyzes the methylthiolation of N6-(dimethylallyl)adenosine (i(6)A), leading to the formation of 2-methylthio-N6-(dimethylallyl)adenosine (ms(2)i(6)A) at position 37 in tRNAs that read codons beginning with uridine. The sequence is that of tRNA-2-methylthio-N(6)-dimethylallyladenosine synthase from Shewanella sediminis (strain HAW-EB3).